The sequence spans 28 residues: fur leader peptide (28 aa).

Functionally, cotranscribed with fur, it is essential for fur translation. The fur ribosomal binding site (RBS) is occluded by the 5'-mRNA secondary structure, which is opened by uof translation. The sequence is that of fur leader peptide (uof) from Escherichia coli (strain K12).